The primary structure comprises 249 residues: MIRILVSNDDGVNAPGIKALTEALAEIATVMTVAPDRNCSGASNSLTLTNPLRINRLDNGYISVHGTPTDCVHLAIRELCDGEPDMVVSGINAGANMGDDTLYSGTVAAAMEGRFLGFPAVAISLNGKALKHYHSAAVYARRIVQGLLAHPIASDQILNINVPDLPLDEIKGIRVTRLGARHKAEGIVRTQDPAGREIFWLGPPGVEQDASEGTDFHAIAHGYVSITPLTVDLTAYRQLSVLQDWVDKI.

Residues D9, D10, S40, and N92 each contribute to the a divalent metal cation site.

This sequence belongs to the SurE nucleotidase family. It depends on a divalent metal cation as a cofactor.

The protein localises to the cytoplasm. The enzyme catalyses a ribonucleoside 5'-phosphate + H2O = a ribonucleoside + phosphate. Nucleotidase that shows phosphatase activity on nucleoside 5'-monophosphates. This chain is 5'-nucleotidase SurE, found in Shewanella sp. (strain MR-4).